We begin with the raw amino-acid sequence, 209 residues long: Yop proteins translocation protein K (209 aa).

Its function is as follows. Belongs to an operon involved in the translocation of Yop proteins across the bacterial membranes or in the specific control of this function. The polypeptide is Yop proteins translocation protein K (yscK) (Yersinia pseudotuberculosis serotype I (strain IP32953)).